A 175-amino-acid polypeptide reads, in one-letter code: Isopentenyl-diphosphate Delta-isomerase (175 aa).

Mn(2+)-binding residues include His-22 and His-29. One can recognise a Nudix hydrolase domain in the interval 27 to 160; sequence KLHRAFSVLL…PAAYTPWLAE (134 aa). Cys-64 is a catalytic residue. Cys-64 contributes to the Mg(2+) binding site. His-66 provides a ligand contact to Mn(2+). Residue Glu-84 coordinates Mg(2+). Mn(2+)-binding residues include Glu-110 and Glu-112. Glu-112 is an active-site residue.

Belongs to the IPP isomerase type 1 family. Requires Mg(2+) as cofactor. Mn(2+) serves as cofactor.

It is found in the cytoplasm. It catalyses the reaction isopentenyl diphosphate = dimethylallyl diphosphate. It functions in the pathway isoprenoid biosynthesis; dimethylallyl diphosphate biosynthesis; dimethylallyl diphosphate from isopentenyl diphosphate: step 1/1. Functionally, catalyzes the 1,3-allylic rearrangement of the homoallylic substrate isopentenyl (IPP) to its highly electrophilic allylic isomer, dimethylallyl diphosphate (DMAPP). The sequence is that of Isopentenyl-diphosphate Delta-isomerase from Nocardia farcinica (strain IFM 10152).